Reading from the N-terminus, the 524-residue chain is Protein hunchback (524 aa).

Disordered regions lie at residues 42 to 86 and 101 to 187; these read IVKR…PQTQ and YNHN…DEQS. Residues 59–75 show a composition bias toward low complexity; the sequence is SGSDFHSSSPSSDTSQD. The segment covering 76 to 86 has biased composition (polar residues); it reads LQHSYQSPQTQ. Basic and acidic residues-rich tracts occupy residues 118–127, 138–154, and 164–178; these read KSEKEEKDME, RKPD…EMSL, and TSEH…KSDN. C2H2-type zinc fingers lie at residues 202 to 224, 231 to 253, 259 to 281, and 298 to 311; these read FKCK…SKVH, LTCP…LRNH, FQCN…MKSH, and YCHS…RYGH. Residues 402-442 form a disordered region; that stretch reads DLSKPGCSYTGEQKSRRKGPAFKVDPTQVESEEEDEETSTT. 2 C2H2-type zinc fingers span residues 471 to 493 and 499 to 523; these read NSCQ…MGYH and FTCN…RVSH.

Belongs to the hunchback C2H2-type zinc-finger protein family.

It localises to the nucleus. Gap class segmentation protein that controls development of head structures. The sequence is that of Protein hunchback (hb) from Tribolium castaneum (Red flour beetle).